We begin with the raw amino-acid sequence, 303 residues long: Esterase (303 aa).

The short motif at 79–81 (HGG) is the Involved in the stabilization of the negatively charged intermediate by the formation of the oxyanion hole element. Active-site residues include S149 and E244.

The protein belongs to the 'GDXG' lipolytic enzyme family.

It localises to the secreted. In Acinetobacter venetianus (strain ATCC 31012 / DSM 23050 / BCRC 14357 / CCUG 45561 / CIP 110063 / KCTC 2702 / LMG 19082 / RAG-1), this protein is Esterase (est).